Here is a 1242-residue protein sequence, read N- to C-terminus: DNA mismatch repair protein MSH6 (1242 aa).

Positions 1 to 11 (MAPATPKTSKT) are enriched in polar residues. A disordered region spans residues 1-271 (MAPATPKTSK…ATSKSSKFNK (271 aa)). Residues 18 to 37 (STSSQKKMKQSSLLSFFSKQ) are compositionally biased toward low complexity. The PIP box signature appears at 27–34 (QSSLLSFF). Residues 54–69 (TLENTATDKITKNPQG) are compositionally biased toward polar residues. Serine 102 bears the Phosphoserine mark. The span at 103-121 (QEPQSDTMLNSNTTEPKST) shows a compositional bias: polar residues. 2 positions are modified to phosphoserine: serine 145 and serine 150. Acidic residues-rich tracts occupy residues 166 to 190 (SESDEDEYLPDKNDGDEDDDIADDK) and 198 to 207 (AEDSGDDDDL). Serine 201 is subject to Phosphoserine. Composition is skewed to polar residues over residues 220-233 (SYNTSHSSSPFTRN) and 245-270 (PNQAPSRSYNPSHSQPSATSKSSKFN). The DNA-binding element occupies 228–299 (SPFTRNISRD…PKSDPEYDPR (72 aa)). Positions 305-421 (SSAWNKFTPF…RELQCILTSG (117 aa)) are mispair-binding domain. Phosphothreonine is present on threonine 451. 982-989 (GANAAGKS) contacts ATP.

The protein belongs to the DNA mismatch repair MutS family. As to quaternary structure, heterodimer consisting of MSH2-MSH6 (MutS alpha). Forms a ternary complex with MutL alpha (MLH1-PMS1). MutS alpha interacts with proliferating cell nuclear antigen (PCNA/POL30). This interaction is disrupted upon binding of MutS alpha to mismatch DNA.

The protein localises to the nucleus. Inhibited by Cd(2+). In terms of biological role, component of the post-replicative DNA mismatch repair system (MMR). Heterodimerizes with MSH2 to form MutS alpha, which binds to DNA mismatches thereby initiating DNA repair. MSH6 provides substrate-binding and substrate specificity to the complex. When bound, MutS alpha bends the DNA helix and shields approximately 20 base pairs. Acts mainly to repair base-base and single insertion-deletion mismatches that occur during replication, but can also repair longer insertion-deletion loops (IDLs), although with decreasing efficiency as the size of the extrahelical loop increases. After mismatch binding, forms a ternary complex with the MutL alpha heterodimer, which is thought to be responsible for directing the downstream MMR events, including strand discrimination, excision, and resynthesis. ATP binding and hydrolysis by the MutS alpha complex is crucial for MMR. Both subunits bind ATP, but with differing affinities, and their ATPase kinetics are also very different. MSH6 binds and hydrolyzes ATP rapidly, whereas MSH2 catalyzes ATP at a substantially slower rate. Binding to a mismatched base pair suppresses MSH6-catalyzed ATP hydrolysis, but not the activity of MSH2. ATP binding to both subunits is necessary to trigger a change in MutS alpha interaction with mismatched DNA, converting MutS alpha into a sliding clamp capable of hydrolysis-independent movement along DNA, and also facilitates formation of ternary complexes containing MutS and MutL proteins and the mismatch. May also be involved in resolution of recombination intermediates. This is DNA mismatch repair protein MSH6 (MSH6) from Saccharomyces cerevisiae (strain ATCC 204508 / S288c) (Baker's yeast).